Consider the following 474-residue polypeptide: Transmembrane transporter FVEG_12640 (474 aa).

Polar residues predominate over residues 1–15; the sequence is MASPTISSMEQYTPS. Positions 1 to 39 are disordered; sequence MASPTISSMEQYTPSSKDEKIVPLHGDAAGSDTEKGESR. The next 10 membrane-spanning stretches (helical) occupy residues 72-92, 133-153, 164-184, 192-212, 231-251, 275-295, 317-337, 364-384, 387-407, and 431-451; these read ILAI…LCIV, LVGV…IVTS, GTCT…FSSI, WLTW…VVAV, WAPI…NIFI, ACLV…LVIY, VAYG…QHVA, LGIN…VPIL, LLGL…PALL, and LIMI…AVLI.

This sequence belongs to the amino acid/polyamine transporter 2 family.

It is found in the membrane. Functionally, transmembrane transporter; part of the Fusarium detoxification of benzoxazolinone cluster 2 (FDB2) involved in the degradation of benzoxazolinones produced by the host plant. Maize, wheat, and rye produce the 2 benzoxazinone phytoanticipins 2,4-dihy-droxy-7-methoxy-1,4-benzoxazin-3-one (DIMBOA) and 2,4-dihydroxy-1,4-benzoxazin-3-one (DIBOA) that, due to their inherent instability once released, spontaneously degrade to the more stable corresponding benzoxazolinones, 6-methoxy-2-benzoxazolinone (MBOA) and 2-benzoxazolinone (BOA), respectively. Might be involved in the transport of metabolites of benzoxazolinone degradation. In Gibberella moniliformis (strain M3125 / FGSC 7600) (Maize ear and stalk rot fungus), this protein is Transmembrane transporter FVEG_12640.